Reading from the N-terminus, the 421-residue chain is AVAAESSTGTWTTVWTDGLTSLDRYKGRCYHIEPVAGEDNQWICYVAYPLDLFEEGSVTNMFTSIVGNVFGFKALRALRLEDLRIPPTYSKTFQGPPHGIQVERDKLNKYGRPLLGCTIKPKLGLSAKNYGRACYECLRGGLDFTKDDENVNSQPFMRWRDRFVFCAEAIYKSQAETGEIKGHYLNATAGTCEEMIKRAVFARELGVPIVMHDYLTGGFTANTTLRHYCRDNGLLLHIHRAMHAVIDRQKNHGMHFRVLAKALRMSGGDHIHSGTVVGKLEGEREMTLGFVDLLRDDFIEKDRARGIFFTQDWVSMPGVIPVASGGIHVWHMPALTEIFGDDSVLQFGGGTLGHPWGNAPGQAANRVALEACVQARNEGRDLAREGNEIIRAACKWSPELAAACEVWKAIKFEFEPVDTID.

The substrate site is built by Asn-68 and Thr-118. Lys-120 functions as the Proton acceptor in the catalytic mechanism. Lys-122 contributes to the substrate binding site. Residues Lys-146, Asp-148, and Glu-149 each contribute to the Mg(2+) site. Lys-146 bears the N6-carboxylysine mark. His-239 functions as the Proton acceptor in the catalytic mechanism. Substrate contacts are provided by Arg-240, His-272, and Ser-324.

Belongs to the RuBisCO large chain family. Type I subfamily. Heterohexadecamer of 8 large chains and 8 small chains; disulfide-linked. The disulfide link is formed within the large subunit homodimers. Mg(2+) is required as a cofactor. Post-translationally, the disulfide bond which can form in the large chain dimeric partners within the hexadecamer appears to be associated with oxidative stress and protein turnover.

The protein localises to the plastid. Its subcellular location is the chloroplast. The catalysed reaction is 2 (2R)-3-phosphoglycerate + 2 H(+) = D-ribulose 1,5-bisphosphate + CO2 + H2O. It carries out the reaction D-ribulose 1,5-bisphosphate + O2 = 2-phosphoglycolate + (2R)-3-phosphoglycerate + 2 H(+). Its function is as follows. RuBisCO catalyzes two reactions: the carboxylation of D-ribulose 1,5-bisphosphate, the primary event in carbon dioxide fixation, as well as the oxidative fragmentation of the pentose substrate in the photorespiration process. Both reactions occur simultaneously and in competition at the same active site. The sequence is that of Ribulose bisphosphate carboxylase large chain (rbcL) from Aegilops tauschii (Tausch's goatgrass).